The following is a 7354-amino-acid chain: Microtubule-actin cross-linking factor 1, isoforms 1/2/3/4 (7354 aa).

The interval 1–47 is disordered; that stretch reads MSSSDEETLSERSCRSERSCRSERSYRSERSGSLSPCPPGDTLPWNL. The tract at residues 1 to 295 is actin-binding; sequence MSSSDEETLS…VITYVSSIYD (295 aa). Ser-4 is subject to Phosphoserine. Residues 9-30 show a composition bias toward basic and acidic residues; the sequence is LSERSCRSERSCRSERSYRSER. At Ser-35 the chain carries Phosphoserine. At Thr-42 the chain carries Phosphothreonine. A Phosphoserine modification is found at Ser-57. Calponin-homology (CH) domains are found at residues 78 to 181 and 194 to 298; these read RVQK…LHFQ and MSAK…DAFP. The LRR 1 repeat unit spans residues 148–171; sequence QRQVKLVNIRNDDITDGNPKLTLG. Ser-280 carries the post-translational modification Phosphoserine. LRR repeat units lie at residues 377–399 and 441–464; these read LYKL…YHPN and LNCE…LESG. Residues 868–925 enclose the SH3 domain; the sequence is KSTLSVKAICDYRQIEITICKNDECVLEDNSQRTKWKVISPTGNEAMVPSVCFLIPPP. The stretch at 1050 to 1073 is one LRR 5 repeat; sequence ISELKNIRLLLEECEQRLLKQIQS. A Phosphoserine modification is found at Ser-1122. LRR repeat units follow at residues 1128-1154, 1187-1210, and 1257-1282; these read ATTL…VYLN, PADL…VKDK, and HRVI…DYRA. Residues Ser-1367 and Ser-1376 each carry the phosphoserine modification. Plectin repeat units lie at residues 1577-1619, 1654-1696, 1769-1809, 1811-1848, and 1855-1885; these read LVLL…QLLG, LKVL…ELQS, RLLE…CAIL, RQLQ…VILE, and GLLL…HKIL. A phosphoserine mark is found at Ser-2051, Ser-2077, and Ser-2081. Basic and acidic residues-rich tracts occupy residues 2120-2131 and 2145-2155; these read KEEQAETLREEN and SEGKDLSTEKS. Residues 2120 to 2155 form a disordered region; sequence KEEQAETLREENISGDPLLVECPEESEGKDLSTEKS. Plectin repeat units lie at residues 2276–2316, 2352–2393, 2394–2425, 2487–2528, and 2671–2715; these read STLS…VKLM, NVLM…RILE, GQVI…DTAD, LLTK…LRKV, and LKVL…ASHQ. Disordered regions lie at residues 2806–2841, 2951–2978, and 3058–3099; these read AGIR…DSKV, EMGG…EVTI, and SQET…HISK. The span at 2812–2837 shows a compositional bias: basic and acidic residues; the sequence is NGEKAEKGRKISVEMEGQRQDEKASS. The span at 2968 to 2978 shows a compositional bias: acidic residues; the sequence is SEEESDQEVTI. 2 positions are modified to phosphoserine: Ser-3082 and Ser-3085. LRR repeat units follow at residues 3225 to 3244, 3606 to 3630, and 3657 to 3681; these read VGQR…LPTR, SGKS…IQSH, and LTAL…TRVA. Spectrin repeat units follow at residues 3845–3920 and 3962–4070; these read ELQK…NFEE and QYQQ…ALLQ. Phosphoserine is present on Ser-3889. Residues 3898-3920 form an LRR 12 repeat; the sequence is KGDLRFVTISGQKVLETENNFEE. LRR repeat units follow at residues 4087-4112 and 4223-4249; these read LQSI…VIQE and IQEL…TLGS. The Spectrin 3 repeat unit spans residues 4428–4536; sequence RMEEVQKEAS…TVARQKQLEE (109 aa). Residues Ser-4458 and Ser-4483 each carry the phosphoserine modification. LRR repeat units lie at residues 4473–4496, 4563–4583, and 4728–4751; these read KAFL…LAGL, GVLG…QFML, and KKRL…RMNR. The Spectrin 4 repeat unit spans residues 4759–4863; that stretch reads TQQFQQMFDE…KTANRQSRLK (105 aa). The residue at position 4921 (Ser-4921) is a Phosphoserine. LRR repeat units follow at residues 5010 to 5035, 5131 to 5153, and 5240 to 5263; these read NKNL…YLRN, NKIQ…MLEE, and KDQV…LIQS. 13 Spectrin repeats span residues 5195–5300, 5307–5409, 5414–5506, 5631–5735, 5742–5844, 5961–6066, 6071–6175, 6181–6284, 6289–6395, 6400–6503, 6508–6614, 6621–6722, and 6726–6830; these read EDFY…QLQE, KFQD…QLED, AKQF…ADIT, RSQQ…ARLE, NQFW…ALDE, LAEK…KLED, AVQY…HKLE, LGQF…QQLQ, QAQG…KLEE, ATEF…RSLD, RAKQ…KLEE, QFMD…RLEQ, and QAEE…QRLE. Thr-5394 bears the Phosphothreonine mark. LRR repeat units lie at residues 5654 to 5678 and 5763 to 5787; these read MALG…AFSI and AQLP…QLRE. At Ser-5988 the chain carries Phosphoserine. At Lys-6166 the chain carries N6-acetyllysine. An LRR 23 repeat occupies 6452–6475; that stretch reads RDQIIELDQTGNQLKFLSQKQDVV. A disordered region spans residues 6904 to 6937; that stretch reads SVEPTHAPFMEKSRSGSRKSLNQPTPPPMPILSQ. A Phosphoserine modification is found at Ser-6923. 2 consecutive EF-hand domains span residues 7001-7036 and 7037-7072; these read HKKS…SKFP and TTKL…NKDA. Ca(2+)-binding residues include Asp-7014, Asp-7016, Asp-7018, Lys-7020, Glu-7025, Asp-7050, Asp-7052, Asp-7054, Tyr-7056, and Glu-7061. The region spanning 7077 to 7155 is the GAR domain; that stretch reads TDADKIEDEV…EFLVKNDPCR (79 aa). The C-terminal tail stretch occupies residues 7077 to 7354; the sequence is TDADKIEDEV…ASPRTPGPKR (278 aa). Residues 7171–7354 form a disordered region; sequence PEGASQGMTP…ASPRTPGPKR (184 aa). Positions 7191 to 7225 are enriched in low complexity; sequence SSRAASPTRSSSSASQSNHSCTSMPSSPATPASGT. Thr-7220 is modified (phosphothreonine). Polar residues predominate over residues 7242–7261; that stretch reads FHSSRTSLAGDTSNSSSPAS. 2 positions are modified to phosphoserine: Ser-7245 and Ser-7258. Low complexity predominate over residues 7276 to 7290; sequence SRPGSRAGSRAGSRA. A 4 X 4 AA tandem repeats of [GS]-S-R-[AR] region spans residues 7279–7294; it reads GSRAGSRAGSRASSRR. A phosphoserine mark is found at Ser-7296 and Ser-7299. The span at 7305–7315 shows a compositional bias: polar residues; sequence ETQSACSDTSE. Over residues 7316 to 7327 the composition is skewed to low complexity; the sequence is SSAAGGQGSSRR.

Belongs to the plakin or cytolinker family. Interacts with AXIN1, LRP6 and GOLGA4. Found in a complex composed of MACF1, APC, AXIN1, CTNNB1 and GSK3B. Interacts with MAPRE1, CLASP1 and CLASP2. Interacts with CAMSAP3. Phosphorylated on serine residues in the C-terminal tail by GSK3B. Phosphorylation inhibits microtubule-binding and this plays a critical role in bulge stem cell migration and skin wound repair. Wnt-signaling can repress phosphorylation. In terms of tissue distribution, enriched in the hair follicle stem cells (at protein level). Isoform 1 and isoform 2 are ubiquitous expressed, with higher levels seen in lung, heart, thymus, spleen and brain.

It is found in the cytoplasm. The protein resides in the cytoskeleton. The protein localises to the golgi apparatus. It localises to the cell membrane. Its subcellular location is the cell projection. It is found in the ruffle membrane. Its function is as follows. F-actin-binding protein which plays a role in cross-linking actin to other cytoskeletal proteins and also binds to microtubules. Plays an important role in ERBB2-dependent stabilization of microtubules at the cell cortex. Acts as a positive regulator of Wnt receptor signaling pathway and is involved in the translocation of AXIN1 and its associated complex (composed of APC, CTNNB1 and GSK3B) from the cytoplasm to the cell membrane. Has actin-regulated ATPase activity and is essential for controlling focal adhesions (FAs) assembly and dynamics. Interaction with CAMSAP3 at the minus ends of non-centrosomal microtubules tethers microtubules minus-ends to actin filaments, regulating focal adhesion size and cell migration. May play role in delivery of transport vesicles containing GPI-linked proteins from the trans-Golgi network through its interaction with GOLGA4. Plays a key role in wound healing and epidermal cell migration. Required for efficient upward migration of bulge cells in response to wounding and this function is primarily rooted in its ability to coordinate microtubule dynamics and polarize hair follicle stem cells. As a regulator of actin and microtubule arrangement and stabilization, it plays an essential role in neurite outgrowth, branching and spine formation during brain development. The polypeptide is Microtubule-actin cross-linking factor 1, isoforms 1/2/3/4 (Mus musculus (Mouse)).